Reading from the N-terminus, the 184-residue chain is Large ribosomal subunit protein uL15 (184 aa).

Residues 1–55 are disordered; it reads MDLSSLSPAKGSVKNKKRVGRGQGSGNGTTAGKGNKGQQSRSGYKRPVSEGGQMP. The segment covering 21-35 has biased composition (gly residues); that stretch reads RGQGSGNGTTAGKGN.

Belongs to the universal ribosomal protein uL15 family. As to quaternary structure, part of the 50S ribosomal subunit.

In terms of biological role, binds to the 23S rRNA. The polypeptide is Large ribosomal subunit protein uL15 (Prosthecochloris aestuarii (strain DSM 271 / SK 413)).